Here is a 183-residue protein sequence, read N- to C-terminus: Adenine phosphoribosyltransferase (183 aa).

This sequence belongs to the purine/pyrimidine phosphoribosyltransferase family. In terms of assembly, homodimer.

The protein localises to the cytoplasm. The catalysed reaction is AMP + diphosphate = 5-phospho-alpha-D-ribose 1-diphosphate + adenine. Its pathway is purine metabolism; AMP biosynthesis via salvage pathway; AMP from adenine: step 1/1. Catalyzes a salvage reaction resulting in the formation of AMP, that is energically less costly than de novo synthesis. This is Adenine phosphoribosyltransferase from Klebsiella pneumoniae (strain 342).